The following is a 222-amino-acid chain: Chalcone--flavanone isomerase 1 (222 aa).

Residues Thr48, Asn113, and Thr190 each coordinate substrate.

It belongs to the chalcone isomerase family.

The enzyme catalyses a chalcone = a flavanone.. Its pathway is secondary metabolite biosynthesis; flavonoid biosynthesis. Its function is as follows. Catalyzes the intramolecular cyclization of bicyclic chalcones into tricyclic (S)-flavanones. Responsible for the isomerization of 4,2',4',6'-tetrahydroxychalcone (also termed chalcone) into naringenin. The polypeptide is Chalcone--flavanone isomerase 1 (CHI1) (Medicago sativa (Alfalfa)).